Consider the following 199-residue polypeptide: Protein P1 (199 aa).

This Rice tungro bacilliform virus (isolate Philippines) (RTBV) protein is Protein P1.